The chain runs to 365 residues: tRNA/tmRNA (uracil-C(5))-methyltransferase (365 aa).

Positions 189, 217, 222, 238, and 298 each coordinate S-adenosyl-L-methionine. C323 functions as the Nucleophile in the catalytic mechanism. E357 functions as the Proton acceptor in the catalytic mechanism.

This sequence belongs to the class I-like SAM-binding methyltransferase superfamily. RNA M5U methyltransferase family. TrmA subfamily.

It carries out the reaction uridine(54) in tRNA + S-adenosyl-L-methionine = 5-methyluridine(54) in tRNA + S-adenosyl-L-homocysteine + H(+). The enzyme catalyses uridine(341) in tmRNA + S-adenosyl-L-methionine = 5-methyluridine(341) in tmRNA + S-adenosyl-L-homocysteine + H(+). Functionally, dual-specificity methyltransferase that catalyzes the formation of 5-methyluridine at position 54 (m5U54) in all tRNAs, and that of position 341 (m5U341) in tmRNA (transfer-mRNA). In Shewanella baltica (strain OS185), this protein is tRNA/tmRNA (uracil-C(5))-methyltransferase.